The chain runs to 33 residues: ATP synthase 27 kDa subunit, mitochondrial (33 aa).

It localises to the mitochondrion. Its subcellular location is the mitochondrion inner membrane. Mitochondrial membrane ATP synthase (F(1)F(0) ATP synthase or Complex V) produces ATP from ADP in the presence of a proton gradient across the membrane which is generated by electron transport complexes of the respiratory chain. F-type ATPases consist of two structural domains, F(1) - containing the extramembraneous catalytic core and F(0) - containing the membrane proton channel, linked together by a central stalk and a peripheral stalk. During catalysis, ATP synthesis in the catalytic domain of F(1) is coupled via a rotary mechanism of the central stalk subunits to proton translocation. Part of the complex F(0) domain. This Solanum tuberosum (Potato) protein is ATP synthase 27 kDa subunit, mitochondrial.